Here is a 314-residue protein sequence, read N- to C-terminus: Methionyl-tRNA formyltransferase (314 aa).

Residue 109–112 (SLLP) coordinates (6S)-5,6,7,8-tetrahydrofolate.

The protein belongs to the Fmt family.

The enzyme catalyses L-methionyl-tRNA(fMet) + (6R)-10-formyltetrahydrofolate = N-formyl-L-methionyl-tRNA(fMet) + (6S)-5,6,7,8-tetrahydrofolate + H(+). In terms of biological role, attaches a formyl group to the free amino group of methionyl-tRNA(fMet). The formyl group appears to play a dual role in the initiator identity of N-formylmethionyl-tRNA by promoting its recognition by IF2 and preventing the misappropriation of this tRNA by the elongation apparatus. This is Methionyl-tRNA formyltransferase from Syntrophomonas wolfei subsp. wolfei (strain DSM 2245B / Goettingen).